We begin with the raw amino-acid sequence, 347 residues long: CD5 antigen-like (347 aa).

The first 19 residues, 1–19 (MALLFSLILAICTRPGFLA), serve as a signal peptide directing secretion. SRCR domains follow at residues 24-125 (VRLV…ASCE), 138-239 (VRLA…VECE), and 244-346 (LRLV…VICS). 11 disulfide bridges follow: C33–C67, C49–C114, C62–C124, C96–C106, C163–C228, C176–C238, C208–C218, C253–C287, C269–C335, C282–C345, and C315–C325.

Interacts with FASN; the interaction is direct. Interacts (via SRCR2 and SRCR3) with pentameric IgM (via Fc region); disulfide-linked. In terms of processing, not N-glycosylated. Probably not O-glycosylated. As to expression, expressed in spleen, lymph node, thymus, bone marrow, and fetal liver, but not in non-lymphoid tissues.

It localises to the secreted. The protein localises to the cytoplasm. Its function is as follows. Secreted protein that acts as a key regulator of lipid synthesis: mainly expressed by macrophages in lymphoid and inflamed tissues and regulates mechanisms in inflammatory responses, such as infection or atherosclerosis. Able to inhibit lipid droplet size in adipocytes. Following incorporation into mature adipocytes via CD36-mediated endocytosis, associates with cytosolic FASN, inhibiting fatty acid synthase activity and leading to lipolysis, the degradation of triacylglycerols into glycerol and free fatty acids (FFA). CD5L-induced lipolysis occurs with progression of obesity: participates in obesity-associated inflammation following recruitment of inflammatory macrophages into adipose tissues, a cause of insulin resistance and obesity-related metabolic disease. Regulation of intracellular lipids mediated by CD5L has a direct effect on transcription regulation mediated by nuclear receptors ROR-gamma (RORC). Acts as a key regulator of metabolic switch in T-helper Th17 cells. Regulates the expression of pro-inflammatory genes in Th17 cells by altering the lipid content and limiting synthesis of cholesterol ligand of RORC, the master transcription factor of Th17-cell differentiation. CD5L is mainly present in non-pathogenic Th17 cells, where it decreases the content of polyunsaturated fatty acyls (PUFA), affecting two metabolic proteins MSMO1 and CYP51A1, which synthesize ligands of RORC, limiting RORC activity and expression of pro-inflammatory genes. Participates in obesity-associated autoimmunity via its association with IgM, interfering with the binding of IgM to Fcalpha/mu receptor and enhancing the development of long-lived plasma cells that produce high-affinity IgG autoantibodies. Also acts as an inhibitor of apoptosis in macrophages: promotes macrophage survival from the apoptotic effects of oxidized lipids in case of atherosclerosis. Involved in early response to microbial infection against various pathogens by acting as a pattern recognition receptor and by promoting autophagy. This is CD5 antigen-like (CD5L) from Homo sapiens (Human).